A 300-amino-acid polypeptide reads, in one-letter code: NAD kinase (300 aa).

Residue Asp77 is the Proton acceptor of the active site. Residues 77-78, 151-152, His162, Arg179, Asp181, and 192-197 each bind NAD(+); these read DG, ND, and TAYSLS.

Belongs to the NAD kinase family. Requires a divalent metal cation as cofactor.

It localises to the cytoplasm. It catalyses the reaction NAD(+) + ATP = ADP + NADP(+) + H(+). Its function is as follows. Involved in the regulation of the intracellular balance of NAD and NADP, and is a key enzyme in the biosynthesis of NADP. Catalyzes specifically the phosphorylation on 2'-hydroxyl of the adenosine moiety of NAD to yield NADP. This Cellvibrio japonicus (strain Ueda107) (Pseudomonas fluorescens subsp. cellulosa) protein is NAD kinase.